An 84-amino-acid polypeptide reads, in one-letter code: uncharacterized protein (84 aa).

The chain crosses the membrane as a helical span at residues Thr13 to Leu35. A coiled-coil region spans residues Leu41–Lys84.

The protein localises to the host membrane. This is an uncharacterized protein from Sulfolobus islandicus rod-shaped virus 1 (SIRV-1).